The following is a 1110-amino-acid chain: Ribosome assembly protein 1 (1110 aa).

The 246-residue stretch at 17-262 (SCIRNICIVA…QKLGAKRENL (246 aa)) folds into the tr-type G domain. GTP-binding positions include 26–33 (AHVDHGKT), 102–106 (DSPGH), and 156–159 (NKID). The residue at position 431 (S431) is a Phosphoserine.

It belongs to the TRAFAC class translation factor GTPase superfamily. Classic translation factor GTPase family.

The protein localises to the cytoplasm. It catalyses the reaction GTP + H2O = GDP + phosphate + H(+). GTPase activity is stimulated in the presence of 60S subunits. Its function is as follows. GTPase involved in the biogenesis of the 60S ribosomal subunit and translational activation of ribosomes. Together with SDO1, may trigger the GTP-dependent release of TIF6 from 60S pre-ribosomes in the cytoplasm, thereby activating ribosomes for translation competence by allowing 80S ribosome assembly and facilitating TIF6 recycling to the nucleus, where it is required for 60S rRNA processing and nuclear export. Inhibits GTPase activity of ribosome-bound EF-2. The protein is Ribosome assembly protein 1 (RIA1) of Saccharomyces cerevisiae (strain ATCC 204508 / S288c) (Baker's yeast).